Reading from the N-terminus, the 354-residue chain is Ribosomal RNA large subunit methyltransferase M (354 aa).

Residues Ser-183, 216-219 (SPGG), Asp-235, Asp-255, and Asp-271 each bind S-adenosyl-L-methionine. Lys-300 (proton acceptor) is an active-site residue.

This sequence belongs to the class I-like SAM-binding methyltransferase superfamily. RNA methyltransferase RlmE family. RlmM subfamily. As to quaternary structure, monomer.

It is found in the cytoplasm. The enzyme catalyses cytidine(2498) in 23S rRNA + S-adenosyl-L-methionine = 2'-O-methylcytidine(2498) in 23S rRNA + S-adenosyl-L-homocysteine + H(+). In terms of biological role, catalyzes the 2'-O-methylation at nucleotide C2498 in 23S rRNA. In Pseudomonas putida (strain ATCC 700007 / DSM 6899 / JCM 31910 / BCRC 17059 / LMG 24140 / F1), this protein is Ribosomal RNA large subunit methyltransferase M.